We begin with the raw amino-acid sequence, 92 residues long: Phospholemman (92 aa).

An N-terminal signal peptide occupies residues 1 to 20 (MASPGHILIVCVCLLSMASA). The Extracellular portion of the chain corresponds to 21-35 (EAPQEPDPFTYDYHT). A helical transmembrane segment spans residues 36-56 (LRIGGLTIAGILFILGILIIL). At 57-92 (SKRCRCKFNQQQRTGEPDEEEGTFRSSIRRLSTRRR) the chain is on the cytoplasmic side. Cys-60 is lipidated: S-palmitoyl cysteine. Position 62 is an S-glutathionyl cysteine; alternate (Cys-62). The S-palmitoyl cysteine; alternate moiety is linked to residue Cys-62. Residues 66–92 (QQQRTGEPDEEEGTFRSSIRRLSTRRR) are disordered. At Thr-79 the chain carries Phosphothreonine. Ser-82 is subject to Phosphoserine. Ser-83 carries the post-translational modification Phosphoserine; by PKA and PKC. Residues 83–92 (SIRRLSTRRR) are compositionally biased toward basic residues. Ser-88 bears the Phosphoserine; by PKA mark. The residue at position 89 (Thr-89) is a Phosphothreonine; by PKC.

It belongs to the FXYD family. Homotetramer. Monomer. Regulatory subunit of the sodium/potassium-transporting ATPase (NKA) which is composed of a catalytic alpha subunit, a non-catalytic beta subunit and an additional regulatory subunit. The monomeric form associates with NKA while the oligomeric form does not. Interacts with the catalytic alpha-1 subunit ATP1A1. Also interacts with the catalytic alpha-2 and alpha-3 subunits ATP1A2 and ATP1A3. Very little interaction with ATP1A1, ATP1A2 or ATP1A3 when phosphorylated at Ser-83. Interacts with the non-catalytic beta-1 subunit ATP1B1. Oxidative stress decreases interaction with ATP1A1 but increases interaction with ATP1B1. In terms of processing, major plasma membrane substrate for cAMP-dependent protein kinase (PKA) and protein kinase C (PKC) in several different tissues. Phosphorylated in response to insulin and adrenergic stimulation. Phosphorylation at Ser-88 stimulates sodium/potassium-transporting ATPase activity while the unphosphorylated form inhibits sodium/potassium-transporting ATPase activity. Phosphorylation increases tetramerization, decreases binding to ATP1A1 and reduces inhibition of ATP1A1 activity. Phosphorylation at Ser-83 leads to greatly reduced interaction with ATP1A1, ATP1A2 and ATP1A3. May be phosphorylated by DMPK. Post-translationally, palmitoylation increases half-life and stability and is enhanced upon phosphorylation at Ser-88 by PKA. As to expression, in adult brain, highest levels are found in the cerebellum and in the lateral, third and fourth ventricles of the choroid plexus (at protein level). Also detected in cells of a portion of the ependymal lining of the lateral ventricle on its rostral surface posterior to the caudate putamen (at protein level). Expressed in a subset of neurons which secrete gonadotropin-releasing hormone.

It localises to the cell membrane. The protein localises to the sarcolemma. The protein resides in the apical cell membrane. Its subcellular location is the membrane. It is found in the caveola. It localises to the T-tubule. In terms of biological role, associates with and regulates the activity of the sodium/potassium-transporting ATPase (NKA) which transports Na(+) out of the cell and K(+) into the cell. Inhibits NKA activity in its unphosphorylated state and stimulates activity when phosphorylated. Reduces glutathionylation of the NKA beta-1 subunit ATP1B1, thus reversing glutathionylation-mediated inhibition of ATP1B1. Contributes to female sexual development by maintaining the excitability of neurons which secrete gonadotropin-releasing hormone. This chain is Phospholemman, found in Rattus norvegicus (Rat).